Consider the following 153-residue polypeptide: Superoxide dismutase [Cu-Zn] (153 aa).

3 residues coordinate Cu cation: His45, His47, and His62. An intrachain disulfide couples Cys56 to Cys145. 4 residues coordinate Zn(2+): His62, His70, His79, and Asp82. Position 119 (His119) interacts with Cu cation.

Belongs to the Cu-Zn superoxide dismutase family. Homodimer. Cu cation serves as cofactor. The cofactor is Zn(2+).

It is found in the cytoplasm. It carries out the reaction 2 superoxide + 2 H(+) = H2O2 + O2. In terms of biological role, destroys radicals which are normally produced within the cells and which are toxic to biological systems. The protein is Superoxide dismutase [Cu-Zn] (SOD) of Schistosoma mansoni (Blood fluke).